Reading from the N-terminus, the 401-residue chain is Haptoglobin (401 aa).

A signal peptide spans 1 to 18; it reads MSALQAVVTLLLCGQLLA. Sushi domains lie at 28 to 83 and 85 to 142; these read DSCP…ECEE and DSCP…ECEA. Intrachain disulfides connect cysteine 49–cysteine 81, cysteine 106–cysteine 140, and cysteine 144–cysteine 261. A Peptidase S1 domain is found at 157–399; sequence IIGGSLDAKG…ILDWVRKTIA (243 aa). Residues asparagine 286 and asparagine 316 are each glycosylated (N-linked (GlcNAc...) asparagine). 2 cysteine pairs are disulfide-bonded: cysteine 304–cysteine 335 and cysteine 346–cysteine 376. The tract at residues 313–318 is interaction with CD163; sequence APKNKT.

Belongs to the peptidase S1 family. Tetramer of two alpha and two beta chains; disulfide-linked. The hemoglobin/haptoglobin complex is composed of a haptoglobin dimer bound to two hemoglobin alpha-beta dimers. Interacts with CD163. Interacts with ERGIC3. Expressed by the liver and secreted in plasma.

It localises to the secreted. The protein localises to the extracellular space. Functionally, as a result of hemolysis, hemoglobin is found to accumulate in the kidney and is secreted in the urine. Haptoglobin captures, and combines with free plasma hemoglobin to allow hepatic recycling of heme iron and to prevent kidney damage. Haptoglobin also acts as an antioxidant, has antibacterial activity and plays a role in modulating many aspects of the acute phase response. Hemoglobin/haptoglobin complexes are rapidly cleared by the macrophage CD163 scavenger receptor expressed on the surface of liver Kupfer cells through an endocytic lysosomal degradation pathway. This Bos taurus (Bovine) protein is Haptoglobin (HP).